The following is a 95-amino-acid chain: DNA-directed RNA polymerase subunit Rpo11 (95 aa).

This sequence belongs to the archaeal Rpo11/eukaryotic RPB11/RPC19 RNA polymerase subunit family. As to quaternary structure, part of the RNA polymerase complex.

The protein resides in the cytoplasm. The catalysed reaction is RNA(n) + a ribonucleoside 5'-triphosphate = RNA(n+1) + diphosphate. DNA-dependent RNA polymerase (RNAP) catalyzes the transcription of DNA into RNA using the four ribonucleoside triphosphates as substrates. This Pyrococcus abyssi (strain GE5 / Orsay) protein is DNA-directed RNA polymerase subunit Rpo11.